The primary structure comprises 231 residues: NADH-ubiquinone oxidoreductase chain 4 (231 aa).

The next 7 helical transmembrane spans lie at 1 to 21 (PIAG…YGII), 34 to 54 (VFLP…LTCL), 61 to 80 (SLIA…AIII), 84 to 106 (WGLS…LFCL), 128 to 148 (ILPM…ATPP), 156 to 176 (LLII…LGLS), and 211 to 231 (LLMI…ELVI).

Belongs to the complex I subunit 4 family.

It is found in the mitochondrion membrane. It catalyses the reaction a ubiquinone + NADH + 5 H(+)(in) = a ubiquinol + NAD(+) + 4 H(+)(out). Core subunit of the mitochondrial membrane respiratory chain NADH dehydrogenase (Complex I) that is believed to belong to the minimal assembly required for catalysis. Complex I functions in the transfer of electrons from NADH to the respiratory chain. The immediate electron acceptor for the enzyme is believed to be ubiquinone. In Tropidolaemus wagleri (Wagler's pit viper), this protein is NADH-ubiquinone oxidoreductase chain 4 (MT-ND4).